A 594-amino-acid polypeptide reads, in one-letter code: Segmentation polarity homeobox protein engrailed (594 aa).

Disordered stretches follow at residues 1-64 (MALE…TRDE), 76-127 (IKQE…PASI), 141-164 (KATAEQQQQPHPQPPAIREPISPG), 198-217 (HYYQPSPSHPQPIVPQPQRA), 231-299 (ISKS…PTGS), 387-458 (AGTG…GSEN), and 474-501 (DRPSSGPRYRRTKQPKEKGDSEEKRPRT). A compositionally biased stretch (low complexity) spans 22–60 (SQSPTSTTTVTMATASPVPACTTTTTTTSTSGASAASSP). Positions 92–112 (PHHHQHPHHHQLPHHPHHQHH) are enriched in basic residues. Positions 151 to 164 (HPQPPAIREPISPG) are enriched in pro residues. Residues 237–247 (LCSSNGSSSAT) are compositionally biased toward polar residues. 2 stretches are compositionally biased toward low complexity: residues 278 to 299 (ASPSSASSAMTTPVTTSSPTGS) and 387 to 402 (AGTGSLNGSGSAANGA). Composition is skewed to polar residues over residues 426 to 436 (SSETNGSSSQD) and 448 to 458 (ETSSTKDGSEN). The span at 487 to 499 (QPKEKGDSEEKRP) shows a compositional bias: basic and acidic residues. Positions 496 to 555 (EKRPRTAFSNAQLQRLKNEFNENRYLTEKRRQTLSAELGLNEAQIKIWFQNKRAKIKKSS) form a DNA-binding region, homeobox.

The protein belongs to the engrailed homeobox family.

The protein resides in the nucleus. Its function is as follows. This protein specifies the body segmentation pattern. It is required for the development of the central nervous system. Transcriptional regulator that repress activated promoters. The protein is Segmentation polarity homeobox protein engrailed (en) of Anopheles gambiae (African malaria mosquito).